The primary structure comprises 447 residues: Phospholipase A(1) LCAT3 (447 aa).

Ser-177 serves as the catalytic Acyl-ester intermediate. Active-site charge relay system residues include Asp-384 and His-409.

The protein belongs to the AB hydrolase superfamily. Lipase family.

The protein localises to the microsome membrane. The enzyme catalyses a 1,2-diacyl-sn-glycero-3-phosphocholine + H2O = a 2-acyl-sn-glycero-3-phosphocholine + a fatty acid + H(+). In terms of biological role, hydrolyzes the sn-1 acylester bond of phospholipids. Phosphatidylcholine, phosphatidylethanolamine and phosphatidic acid can be used as substrates. Weak activity with lysophosphatidylcholine and no activity with tripalmitoylglycerol and cholesteryl oleate. Seems to have a preference for unsaturated fatty acids at the sn-1 position. The polypeptide is Phospholipase A(1) LCAT3 (LCAT3) (Arabidopsis thaliana (Mouse-ear cress)).